Here is a 677-residue protein sequence, read N- to C-terminus: UvrABC system protein B (677 aa).

Residues 27–192 (ANLGQGVRDQ…QRNDFDFHRG (166 aa)) enclose the Helicase ATP-binding domain. 40–47 (GVTGSGKT) contributes to the ATP binding site. Residues 93–116 (YYDYYQPEAYVPASDTYIEKDSSI) carry the Beta-hairpin motif. One can recognise a Helicase C-terminal domain in the interval 432 to 594 (QVDDLLAECR…IEPRTIRKSL (163 aa)). Positions 638–673 (AKHIQKLEREMREAAKELEFERAATLRDRIRLLRER) constitute a UVR domain.

This sequence belongs to the UvrB family. Forms a heterotetramer with UvrA during the search for lesions. Interacts with UvrC in an incision complex.

The protein resides in the cytoplasm. Its function is as follows. The UvrABC repair system catalyzes the recognition and processing of DNA lesions. A damage recognition complex composed of 2 UvrA and 2 UvrB subunits scans DNA for abnormalities. Upon binding of the UvrA(2)B(2) complex to a putative damaged site, the DNA wraps around one UvrB monomer. DNA wrap is dependent on ATP binding by UvrB and probably causes local melting of the DNA helix, facilitating insertion of UvrB beta-hairpin between the DNA strands. Then UvrB probes one DNA strand for the presence of a lesion. If a lesion is found the UvrA subunits dissociate and the UvrB-DNA preincision complex is formed. This complex is subsequently bound by UvrC and the second UvrB is released. If no lesion is found, the DNA wraps around the other UvrB subunit that will check the other stand for damage. This Nitratidesulfovibrio vulgaris (strain DP4) (Desulfovibrio vulgaris) protein is UvrABC system protein B.